Here is a 181-residue protein sequence, read N- to C-terminus: Bradykinin potentiating and C-type natriuretic peptides (181 aa).

Residues 1-23 form the signal peptide; it reads MFVSRLAASGLLLLALLAVSLDG. A propeptide spanning residues 24-27 is cleaved from the precursor; sequence KPLQ. Residues Gln-28 and Gln-31 each carry the pyrrolidone carboxylic acid modification. Residues 41–43 constitute a propeptide that is removed on maturation; that stretch reads LVV. Gln-44 is modified (pyrrolidone carboxylic acid). Residues 50-52 constitute a propeptide that is removed on maturation; that stretch reads TQL. Gln-53 carries the pyrrolidone carboxylic acid modification. A propeptide spanning residues 59–159 is cleaved from the precursor; it reads AGGTTALREE…ARRLKGLAKK (101 aa). A disordered region spans residues 74-150; it reads EAALDTPPAG…GGGCGGGGGA (77 aa). The segment covering 104–114 has biased composition (low complexity); it reads SKGASATSAAS. A compositionally biased stretch (gly residues) spans 140–150; the sequence is AGGGCGGGGGA. Cys-165 and Cys-181 are oxidised to a cystine.

It in the N-terminal section; belongs to the bradykinin-potentiating peptide family. The protein in the C-terminal section; belongs to the natriuretic peptide family. Venom gland.

It is found in the secreted. Its function is as follows. Bradykinin-potentiating peptide both inhibits the activity of the angiotensin-converting enzyme (ACE) and enhances the action of bradykinin by inhibiting the peptidases that inactivate it. It acts as an indirect hypotensive agent. Synthetic Cdt1a, Cdt1b and the short hexapeptide Cdt3 are able to potentiate the hypotensive effect mediated by Bk on the blood pressure of anesthetized rats. Functionally, has a vasorelaxant activity in rat aortic strips and a diuretic potency in anesthetized rats. May act by activating natriuretic receptors (NPR1 and/or NPR2). The polypeptide is Bradykinin potentiating and C-type natriuretic peptides (Crotalus durissus terrificus (South American rattlesnake)).